Consider the following 367-residue polypeptide: Phosphoribosylaminoimidazole-succinocarboxamide synthase (367 aa).

The protein belongs to the SAICAR synthetase family.

It catalyses the reaction 5-amino-1-(5-phospho-D-ribosyl)imidazole-4-carboxylate + L-aspartate + ATP = (2S)-2-[5-amino-1-(5-phospho-beta-D-ribosyl)imidazole-4-carboxamido]succinate + ADP + phosphate + 2 H(+). It participates in purine metabolism; IMP biosynthesis via de novo pathway; 5-amino-1-(5-phospho-D-ribosyl)imidazole-4-carboxamide from 5-amino-1-(5-phospho-D-ribosyl)imidazole-4-carboxylate: step 1/2. The polypeptide is Phosphoribosylaminoimidazole-succinocarboxamide synthase (Colwellia psychrerythraea (strain 34H / ATCC BAA-681) (Vibrio psychroerythus)).